A 114-amino-acid polypeptide reads, in one-letter code: MGFPIPDPYVWDPSFRIFYSIIDDEHKTLFNGIFHLGHDDSADNLAELRRCTGKHFLNEQVLMQDSQYAGYAEHVRAHDGFIHQLDNWHGDVKWAKNWLVNHIKTIDFKYKGKI.

The Fe cation site is built by His-26, His-55, Glu-59, His-74, His-78, His-102, and Asp-107.

This sequence belongs to the hemerythrin family.

Hemerythrin is a respiratory protein in blood cells of certain marine worms. The oxygen-binding site in each chain contains two iron atoms. This is Hemerythrin subunit 2 from Golfingia vulgaris (Marine worm).